Reading from the N-terminus, the 488-residue chain is UDP-N-acetylmuramoyl-L-alanyl-D-glutamate--2,6-diaminopimelate ligase (488 aa).

Residue serine 29 participates in UDP-N-acetyl-alpha-D-muramoyl-L-alanyl-D-glutamate binding. 108 to 114 (GTSGKTS) is an ATP binding site. UDP-N-acetyl-alpha-D-muramoyl-L-alanyl-D-glutamate-binding positions include 150–151 (TT), serine 177, glutamine 183, and arginine 185. Lysine 217 is modified (N6-carboxylysine). Residues arginine 381, 405–408 (DNPR), glycine 453, and glutamate 457 contribute to the meso-2,6-diaminopimelate site. The Meso-diaminopimelate recognition motif signature appears at 405–408 (DNPR).

The protein belongs to the MurCDEF family. MurE subfamily. The cofactor is Mg(2+). In terms of processing, carboxylation is probably crucial for Mg(2+) binding and, consequently, for the gamma-phosphate positioning of ATP.

It localises to the cytoplasm. It catalyses the reaction UDP-N-acetyl-alpha-D-muramoyl-L-alanyl-D-glutamate + meso-2,6-diaminopimelate + ATP = UDP-N-acetyl-alpha-D-muramoyl-L-alanyl-gamma-D-glutamyl-meso-2,6-diaminopimelate + ADP + phosphate + H(+). Its pathway is cell wall biogenesis; peptidoglycan biosynthesis. Catalyzes the addition of meso-diaminopimelic acid to the nucleotide precursor UDP-N-acetylmuramoyl-L-alanyl-D-glutamate (UMAG) in the biosynthesis of bacterial cell-wall peptidoglycan. This chain is UDP-N-acetylmuramoyl-L-alanyl-D-glutamate--2,6-diaminopimelate ligase, found in Brucella melitensis biotype 1 (strain ATCC 23456 / CCUG 17765 / NCTC 10094 / 16M).